The sequence spans 349 residues: GDSL esterase/lipase At1g58725 (349 aa).

A signal peptide spans 1–19 (MKIQILLFALVLIFVEANA). A glycan (N-linked (GlcNAc...) asparagine) is linked at N25. S37 serves as the catalytic Nucleophile. N316 is a glycosylation site (N-linked (GlcNAc...) asparagine). Catalysis depends on residues D324 and H327.

It belongs to the 'GDSL' lipolytic enzyme family.

The protein localises to the secreted. This is GDSL esterase/lipase At1g58725 from Arabidopsis thaliana (Mouse-ear cress).